The chain runs to 349 residues: Putative methylesterase 12, chloroplastic (349 aa).

A chloroplast-targeting transit peptide spans 1 to 77; that stretch reads MGNRVICMKK…GSTSSRRGTL (77 aa). Residues 61–80 are disordered; sequence GSMSRRIGSTSSRRGTLSDS. Ser173 functions as the Acyl-ester intermediate in the catalytic mechanism. Catalysis depends on charge relay system residues Asp300 and His328.

It belongs to the AB hydrolase superfamily. Methylesterase family.

It is found in the plastid. The protein localises to the chloroplast. Its function is as follows. Putative methylesterase. The polypeptide is Putative methylesterase 12, chloroplastic (Arabidopsis thaliana (Mouse-ear cress)).